We begin with the raw amino-acid sequence, 393 residues long: Dual-specificity RNA methyltransferase RlmN (393 aa).

The active-site Proton acceptor is glutamate 114. In terms of domain architecture, Radical SAM core spans 120 to 359 (EDDRATLCVS…VIVRKTRGDD (240 aa)). Cysteine 127 and cysteine 364 are disulfide-bonded. [4Fe-4S] cluster contacts are provided by cysteine 134, cysteine 138, and cysteine 141. Residues 188–189 (GE), serine 220, 242–244 (SLH), and asparagine 321 contribute to the S-adenosyl-L-methionine site. Residue cysteine 364 is the S-methylcysteine intermediate of the active site.

The protein belongs to the radical SAM superfamily. RlmN family. The cofactor is [4Fe-4S] cluster.

Its subcellular location is the cytoplasm. It catalyses the reaction adenosine(2503) in 23S rRNA + 2 reduced [2Fe-2S]-[ferredoxin] + 2 S-adenosyl-L-methionine = 2-methyladenosine(2503) in 23S rRNA + 5'-deoxyadenosine + L-methionine + 2 oxidized [2Fe-2S]-[ferredoxin] + S-adenosyl-L-homocysteine. The catalysed reaction is adenosine(37) in tRNA + 2 reduced [2Fe-2S]-[ferredoxin] + 2 S-adenosyl-L-methionine = 2-methyladenosine(37) in tRNA + 5'-deoxyadenosine + L-methionine + 2 oxidized [2Fe-2S]-[ferredoxin] + S-adenosyl-L-homocysteine. Its function is as follows. Specifically methylates position 2 of adenine 2503 in 23S rRNA and position 2 of adenine 37 in tRNAs. m2A2503 modification seems to play a crucial role in the proofreading step occurring at the peptidyl transferase center and thus would serve to optimize ribosomal fidelity. This Actinobacillus pleuropneumoniae serotype 3 (strain JL03) protein is Dual-specificity RNA methyltransferase RlmN.